We begin with the raw amino-acid sequence, 656 residues long: DNA mismatch repair protein MutL (656 aa).

This sequence belongs to the DNA mismatch repair MutL/HexB family.

This protein is involved in the repair of mismatches in DNA. It is required for dam-dependent methyl-directed DNA mismatch repair. May act as a 'molecular matchmaker', a protein that promotes the formation of a stable complex between two or more DNA-binding proteins in an ATP-dependent manner without itself being part of a final effector complex. This is DNA mismatch repair protein MutL from Lactococcus lactis subsp. lactis (strain IL1403) (Streptococcus lactis).